The following is a 209-amino-acid chain: Thymidylate kinase (209 aa).

10 to 17 (GPEGAGKT) is a binding site for ATP.

Belongs to the thymidylate kinase family.

It catalyses the reaction dTMP + ATP = dTDP + ADP. Functionally, phosphorylation of dTMP to form dTDP in both de novo and salvage pathways of dTTP synthesis. In Anoxybacillus flavithermus (strain DSM 21510 / WK1), this protein is Thymidylate kinase.